Here is a 251-residue protein sequence, read N- to C-terminus: Small ribosomal subunit protein uS2 (251 aa).

The disordered stretch occupies residues 232–251 (EAIAEMDEQVEEDAEEASND).

It belongs to the universal ribosomal protein uS2 family.

The sequence is that of Small ribosomal subunit protein uS2 from Chlorobaculum parvum (strain DSM 263 / NCIMB 8327) (Chlorobium vibrioforme subsp. thiosulfatophilum).